The primary structure comprises 124 residues: MEDYKPFFEAIDELKEKSENGWVVVVEGKKDVRSLRAIGVSGEIVVFTGYASTADTLKDRKVIILTDSDAKGMEIEKGLVEALKTYGKIPDVEIKRKIFSNVRKEISKVEEISAFYEKISGIEL.

Positions 21–98 constitute a Toprim domain; the sequence is GWVVVVEGKK…IPDVEIKRKI (78 aa). Mg(2+)-binding residues include Glu-27, Asp-67, and Asp-69.

It belongs to the UPF0292 family. Requires Mg(2+) as cofactor.

The chain is UPF0292 protein AF_0905 from Archaeoglobus fulgidus (strain ATCC 49558 / DSM 4304 / JCM 9628 / NBRC 100126 / VC-16).